Reading from the N-terminus, the 454-residue chain is Bifunctional protein GlmU (454 aa).

Residues 1-226 (MALNVVILAA…AIEVEGANNR (226 aa)) form a pyrophosphorylase region. UDP-N-acetyl-alpha-D-glucosamine contacts are provided by residues 8–11 (LAAG), lysine 22, glutamine 73, 78–79 (GT), 100–102 (YGD), glycine 137, glutamate 151, asparagine 166, and asparagine 224. Aspartate 102 contacts Mg(2+). Residue asparagine 224 coordinates Mg(2+). Residues 227–247 (VQLAQLERAYQAREAEKLMLA) are linker. Residues 248–454 (GANLRDPHRI…DWKRPVKIKK (207 aa)) are N-acetyltransferase. UDP-N-acetyl-alpha-D-glucosamine-binding residues include arginine 330 and lysine 348. Histidine 360 (proton acceptor) is an active-site residue. UDP-N-acetyl-alpha-D-glucosamine is bound by residues tyrosine 363 and asparagine 374. Residues alanine 377, 383–384 (NY), serine 402, alanine 420, and arginine 437 contribute to the acetyl-CoA site.

In the N-terminal section; belongs to the N-acetylglucosamine-1-phosphate uridyltransferase family. It in the C-terminal section; belongs to the transferase hexapeptide repeat family. As to quaternary structure, homotrimer. It depends on Mg(2+) as a cofactor.

The protein resides in the cytoplasm. It carries out the reaction alpha-D-glucosamine 1-phosphate + acetyl-CoA = N-acetyl-alpha-D-glucosamine 1-phosphate + CoA + H(+). The enzyme catalyses N-acetyl-alpha-D-glucosamine 1-phosphate + UTP + H(+) = UDP-N-acetyl-alpha-D-glucosamine + diphosphate. The protein operates within nucleotide-sugar biosynthesis; UDP-N-acetyl-alpha-D-glucosamine biosynthesis; N-acetyl-alpha-D-glucosamine 1-phosphate from alpha-D-glucosamine 6-phosphate (route II): step 2/2. It participates in nucleotide-sugar biosynthesis; UDP-N-acetyl-alpha-D-glucosamine biosynthesis; UDP-N-acetyl-alpha-D-glucosamine from N-acetyl-alpha-D-glucosamine 1-phosphate: step 1/1. Its pathway is bacterial outer membrane biogenesis; LPS lipid A biosynthesis. Catalyzes the last two sequential reactions in the de novo biosynthetic pathway for UDP-N-acetylglucosamine (UDP-GlcNAc). The C-terminal domain catalyzes the transfer of acetyl group from acetyl coenzyme A to glucosamine-1-phosphate (GlcN-1-P) to produce N-acetylglucosamine-1-phosphate (GlcNAc-1-P), which is converted into UDP-GlcNAc by the transfer of uridine 5-monophosphate (from uridine 5-triphosphate), a reaction catalyzed by the N-terminal domain. In Shewanella putrefaciens (strain CN-32 / ATCC BAA-453), this protein is Bifunctional protein GlmU.